Consider the following 290-residue polypeptide: 33 kDa chaperonin (290 aa).

Cystine bridges form between Cys-234-Cys-236 and Cys-267-Cys-270.

Belongs to the HSP33 family. Under oxidizing conditions two disulfide bonds are formed involving the reactive cysteines. Under reducing conditions zinc is bound to the reactive cysteines and the protein is inactive.

The protein localises to the cytoplasm. In terms of biological role, redox regulated molecular chaperone. Protects both thermally unfolding and oxidatively damaged proteins from irreversible aggregation. Plays an important role in the bacterial defense system toward oxidative stress. This is 33 kDa chaperonin from Colwellia psychrerythraea (strain 34H / ATCC BAA-681) (Vibrio psychroerythus).